We begin with the raw amino-acid sequence, 302 residues long: 2-phosphoglycerate kinase (302 aa).

One can recognise an ATP-cone domain in the interval 2–89 (IKVIERDGKV…FWRRFRKLKI (88 aa)).

The protein belongs to the 2-phosphoglycerate kinase family. It depends on a divalent metal cation as a cofactor.

The enzyme catalyses (2R)-2-phosphoglycerate + ATP = (2R)-2,3-bisphosphoglycerate + ADP + H(+). It participates in thermoadapter biosynthesis; cyclic 2,3-diphosphoglycerate biosynthesis; cyclic 2,3-diphosphoglycerate from 2-phospho-D-glycerate: step 1/2. In terms of biological role, catalyzes the phosphorylation of 2-phosphoglycerate to 2,3-diphosphoglycerate. Involved in the biosynthesis of cyclic 2,3-bisphosphoglycerate, a thermoprotectant. The chain is 2-phosphoglycerate kinase from Pyrococcus furiosus (strain ATCC 43587 / DSM 3638 / JCM 8422 / Vc1).